The chain runs to 306 residues: Probable zinc metalloprotease VDBG_06923 (306 aa).

An N-terminal signal peptide occupies residues 1-28; that stretch reads MNYEAEQPGANDDASGVAVALELARVLA. Aspartate 12 and glutamate 45 together coordinate Zn(2+). An N-linked (GlcNAc...) asparagine glycan is attached at asparagine 60. Residue aspartate 72 coordinates Zn(2+). A Fibronectin type-III domain is found at 218 to 306; that stretch reads APAKVNNVRV…KSPVTIPFPT (89 aa). N-linked (GlcNAc...) asparagine glycans are attached at residues asparagine 228, asparagine 234, and asparagine 244.

The protein belongs to the peptidase M28 family. M28B subfamily. Zn(2+) is required as a cofactor.

Its subcellular location is the secreted. The chain is Probable zinc metalloprotease VDBG_06923 from Verticillium alfalfae (strain VaMs.102 / ATCC MYA-4576 / FGSC 10136) (Verticillium wilt of alfalfa).